A 331-amino-acid chain; its full sequence is Lipoyl synthase (331 aa).

The [4Fe-4S] cluster site is built by Cys60, Cys65, Cys71, Cys86, Cys90, Cys93, and Ser301. Residues Trp72–Leu290 enclose the Radical SAM core domain.

This sequence belongs to the radical SAM superfamily. Lipoyl synthase family. [4Fe-4S] cluster serves as cofactor.

It is found in the cytoplasm. It carries out the reaction [[Fe-S] cluster scaffold protein carrying a second [4Fe-4S](2+) cluster] + N(6)-octanoyl-L-lysyl-[protein] + 2 oxidized [2Fe-2S]-[ferredoxin] + 2 S-adenosyl-L-methionine + 4 H(+) = [[Fe-S] cluster scaffold protein] + N(6)-[(R)-dihydrolipoyl]-L-lysyl-[protein] + 4 Fe(3+) + 2 hydrogen sulfide + 2 5'-deoxyadenosine + 2 L-methionine + 2 reduced [2Fe-2S]-[ferredoxin]. Its pathway is protein modification; protein lipoylation via endogenous pathway; protein N(6)-(lipoyl)lysine from octanoyl-[acyl-carrier-protein]: step 2/2. In terms of biological role, catalyzes the radical-mediated insertion of two sulfur atoms into the C-6 and C-8 positions of the octanoyl moiety bound to the lipoyl domains of lipoate-dependent enzymes, thereby converting the octanoylated domains into lipoylated derivatives. This is Lipoyl synthase from Deinococcus radiodurans (strain ATCC 13939 / DSM 20539 / JCM 16871 / CCUG 27074 / LMG 4051 / NBRC 15346 / NCIMB 9279 / VKM B-1422 / R1).